Consider the following 116-residue polypeptide: MKYSGYHLVIDLFGCNFDQLENTEYMIEMLKKLAEALDTTIIAKAFHKFHPQGFSGALIISESHITIHTWPEDAYIGIDIFTCSKCFDSRKIVAYLKENLIFKKAEIKEILRGKID.

Serine 63 (schiff-base intermediate with substrate; via pyruvic acid) is an active-site residue. The residue at position 63 (serine 63) is a Pyruvic acid (Ser); by autocatalysis. Residue histidine 68 is the Proton acceptor; for processing activity of the active site. Residue cysteine 83 is the Proton donor; for catalytic activity of the active site.

This sequence belongs to the prokaryotic AdoMetDC family. Type 1 subfamily. Heterotetramer of two alpha and two beta chains arranged as a dimer of alpha/beta heterodimers. It depends on pyruvate as a cofactor. In terms of processing, is synthesized initially as an inactive proenzyme. Formation of the active enzyme involves a self-maturation process in which the active site pyruvoyl group is generated from an internal serine residue via an autocatalytic post-translational modification. Two non-identical subunits are generated from the proenzyme in this reaction, and the pyruvate is formed at the N-terminus of the alpha chain, which is derived from the carboxyl end of the proenzyme. The post-translation cleavage follows an unusual pathway, termed non-hydrolytic serinolysis, in which the side chain hydroxyl group of the serine supplies its oxygen atom to form the C-terminus of the beta chain, while the remainder of the serine residue undergoes an oxidative deamination to produce ammonia and the pyruvoyl group blocking the N-terminus of the alpha chain.

It carries out the reaction S-adenosyl-L-methionine + H(+) = S-adenosyl 3-(methylsulfanyl)propylamine + CO2. Its pathway is amine and polyamine biosynthesis; S-adenosylmethioninamine biosynthesis; S-adenosylmethioninamine from S-adenosyl-L-methionine: step 1/1. Its function is as follows. Catalyzes the decarboxylation of S-adenosylmethionine to S-adenosylmethioninamine (dcAdoMet), the propylamine donor required for the synthesis of the polyamines spermine and spermidine from the diamine putrescine. The sequence is that of S-adenosylmethionine decarboxylase proenzyme from Clostridium botulinum (strain 657 / Type Ba4).